Here is a 340-residue protein sequence, read N- to C-terminus: 4-hydroxy-3-methylbut-2-enyl diphosphate reductase (340 aa).

Cys18 provides a ligand contact to [4Fe-4S] cluster. His47 and His83 together coordinate (2E)-4-hydroxy-3-methylbut-2-enyl diphosphate. Residues His47 and His83 each contribute to the dimethylallyl diphosphate site. Isopentenyl diphosphate-binding residues include His47 and His83. Position 105 (Cys105) interacts with [4Fe-4S] cluster. His133 contributes to the (2E)-4-hydroxy-3-methylbut-2-enyl diphosphate binding site. His133 provides a ligand contact to dimethylallyl diphosphate. His133 lines the isopentenyl diphosphate pocket. Catalysis depends on Glu135, which acts as the Proton donor. Residue Thr174 coordinates (2E)-4-hydroxy-3-methylbut-2-enyl diphosphate. Cys204 is a [4Fe-4S] cluster binding site. (2E)-4-hydroxy-3-methylbut-2-enyl diphosphate is bound by residues Ser232, Ser233, Asn234, and Ser277. 4 residues coordinate dimethylallyl diphosphate: Ser232, Ser233, Asn234, and Ser277. Residues Ser232, Ser233, Asn234, and Ser277 each contribute to the isopentenyl diphosphate site.

Belongs to the IspH family. Requires [4Fe-4S] cluster as cofactor.

It carries out the reaction isopentenyl diphosphate + 2 oxidized [2Fe-2S]-[ferredoxin] + H2O = (2E)-4-hydroxy-3-methylbut-2-enyl diphosphate + 2 reduced [2Fe-2S]-[ferredoxin] + 2 H(+). The enzyme catalyses dimethylallyl diphosphate + 2 oxidized [2Fe-2S]-[ferredoxin] + H2O = (2E)-4-hydroxy-3-methylbut-2-enyl diphosphate + 2 reduced [2Fe-2S]-[ferredoxin] + 2 H(+). The protein operates within isoprenoid biosynthesis; dimethylallyl diphosphate biosynthesis; dimethylallyl diphosphate from (2E)-4-hydroxy-3-methylbutenyl diphosphate: step 1/1. It functions in the pathway isoprenoid biosynthesis; isopentenyl diphosphate biosynthesis via DXP pathway; isopentenyl diphosphate from 1-deoxy-D-xylulose 5-phosphate: step 6/6. Functionally, catalyzes the conversion of 1-hydroxy-2-methyl-2-(E)-butenyl 4-diphosphate (HMBPP) into a mixture of isopentenyl diphosphate (IPP) and dimethylallyl diphosphate (DMAPP). Acts in the terminal step of the DOXP/MEP pathway for isoprenoid precursor biosynthesis. In Bartonella quintana (strain Toulouse) (Rochalimaea quintana), this protein is 4-hydroxy-3-methylbut-2-enyl diphosphate reductase.